A 151-amino-acid polypeptide reads, in one-letter code: FAD synthase (151 aa).

Residues 21–22 (TF), 26–29 (HPGH), and Asp-104 each bind ATP.

This sequence belongs to the archaeal FAD synthase family. As to quaternary structure, homodimer. It depends on a divalent metal cation as a cofactor.

The enzyme catalyses FMN + ATP + H(+) = FAD + diphosphate. The protein operates within cofactor biosynthesis; FAD biosynthesis; FAD from FMN: step 1/1. Catalyzes the transfer of the AMP portion of ATP to flavin mononucleotide (FMN) to produce flavin adenine dinucleotide (FAD) coenzyme. This chain is FAD synthase, found in Methanosarcina mazei (strain ATCC BAA-159 / DSM 3647 / Goe1 / Go1 / JCM 11833 / OCM 88) (Methanosarcina frisia).